The sequence spans 237 residues: tRNA (guanine-N(1)-)-methyltransferase (237 aa).

S-adenosyl-L-methionine-binding positions include Gly-113 and 133–138; that span reads VGDFIV.

It belongs to the RNA methyltransferase TrmD family. In terms of assembly, homodimer.

Its subcellular location is the cytoplasm. The catalysed reaction is guanosine(37) in tRNA + S-adenosyl-L-methionine = N(1)-methylguanosine(37) in tRNA + S-adenosyl-L-homocysteine + H(+). Functionally, specifically methylates guanosine-37 in various tRNAs. The sequence is that of tRNA (guanine-N(1)-)-methyltransferase from Hydrogenovibrio crunogenus (strain DSM 25203 / XCL-2) (Thiomicrospira crunogena).